Reading from the N-terminus, the 66-residue chain is Cell division protein FtsB (66 aa).

The Cytoplasmic segment spans residues 1-3; that stretch reads MKM. The chain crosses the membrane as a helical span at residues 4 to 21; the sequence is LKIFLLFLLFWLQCSLWI. At 22 to 66 the chain is on the extracellular side; that stretch reads GKNGILDYIKIYKKIIVQKKKNEDFQIRNNQLILEIERLNNAIKN. Positions 38–66 form a coiled coil; it reads VQKKKNEDFQIRNNQLILEIERLNNAIKN.

Belongs to the FtsB family.

Its subcellular location is the cell membrane. In terms of biological role, essential cell division protein. May link together the upstream cell division proteins, which are predominantly cytoplasmic, with the downstream cell division proteins, which are predominantly extracellular. The protein is Cell division protein FtsB of Buchnera aphidicola subsp. Schizaphis graminum (strain Sg).